The chain runs to 637 residues: CD2-associated protein (637 aa).

The SH3 1; truncated domain maps to 1–59; that stretch reads MVDYIVEYDYDAVHDDELTIRVGEIIRNVKKLQEEGWLEGELNGRRGMFPDNFVKEIKR. Residues 1–175 are interaction with ANLN and localization to the midbody; sequence MVDYIVEYDY…ESTEDGETHN (175 aa). Residue K58 forms a Glycyl lysine isopeptide (Lys-Gly) (interchain with G-Cter in SUMO2) linkage. A phosphoserine mark is found at S80 and S86. The SH3 2 domain occupies 108 to 167; it reads TKKRQCKVLFDYSPQNEDELELIVGDVIDVIEEVEEGWWSGTLNNKLGLFPSNFVKELES. A compositionally biased stretch (basic and acidic residues) spans 166–177; sequence ESTEDGETHNAQ. The disordered stretch occupies residues 166-209; sequence ESTEDGETHNAQEESEVPLTGPTSPLPSPGNGSEPAPGSVAQPK. S224 is subject to Phosphoserine. The segment at 226–254 is disordered; the sequence is KLRTRTSSSETEEKKTEKPLILQPLGSRT. Positions 269–330 constitute an SH3 3 domain; sequence KAKEYCRTLF…PDNFAVQISE (62 aa). The disordered stretch occupies residues 333–455; the sequence is KDFPKPKKPP…KLDPEQLPVR (123 aa). 3 consecutive short sequence motifs (SH3-binding) follow at residues 336-352, 378-397, and 410-422; these read PKPK…APKP, KPSK…APTK, and PKRP…PPPP. Pro residues predominate over residues 341-351; it reads PPPPAKGPAPK. Basic and acidic residues predominate over residues 356-379; sequence AAEKKAFPLKAEEKDEKSLLEQKP. Residues 437–449 show a composition bias toward basic and acidic residues; sequence IDTEPVSKPKLDP. Phosphoserine occurs at positions 458, 469, 510, and 514. The interval 488 to 555 is disordered; the sequence is HLTANRPKMP…SLSTPSSASK (68 aa). The span at 517–539 shows a compositional bias: basic and acidic residues; that stretch reads KTLKLPKEDDSGNLKPLEFKKDA. Residue K523 forms a Glycyl lysine isopeptide (Lys-Gly) (interchain with G-Cter in SUMO2) linkage. The span at 540–555 shows a compositional bias: low complexity; it reads SYSSKSSLSTPSSASK. Phosphothreonine is present on T563. Residues 578-636 adopt a coiled-coil conformation; that stretch reads RNSVDELRAQIIELLCIVDALKKDHGKELEKLRKELEEEKAMRSNLEVEIAKLKKAVLL. The residue at position 580 (S580) is a Phosphoserine.

As to quaternary structure, homodimer. Interacts with F-actin, PKD2, NPHS1 and NPHS2. Interacts with WTIP. Interacts with DDN; interaction is direct. Interacts (via SH3 2 domain) with CBL (via phosphorylated C-terminus). Interacts with BCAR1/p130Cas (via SH3 domain). Interacts with MVB12A and ARHGAP17. Interacts with ANLN, CD2 and CBLB. Interacts with PDCD6IP and TSG101. Interacts with RIN3. Interacts directly with RET (inactive) and CBLC; upon RET activation by GDNF suggested to dissociate from RET as CBLC:CD2AP complex. Interacts with CGNL1 and SH3BP1; probably part of a complex at cell junctions. Interacts with CAPZA1. Post-translationally, phosphorylated on tyrosine residues; probably by c-Abl, Fyn and c-Src. In terms of tissue distribution, expressed in podocytes (at protein level).

It localises to the cytoplasm. It is found in the cytoskeleton. The protein resides in the cell projection. Its subcellular location is the ruffle. The protein localises to the cell junction. In terms of biological role, seems to act as an adapter protein between membrane proteins and the actin cytoskeleton. In collaboration with CBLC, modulates the rate of RET turnover and may act as regulatory checkpoint that limits the potency of GDNF on neuronal survival. Controls CBLC function, converting it from an inhibitor to a promoter of RET degradation. May play a role in receptor clustering and cytoskeletal polarity in the junction between T-cell and antigen-presenting cell. May anchor the podocyte slit diaphragm to the actin cytoskeleton in renal glomerolus. Also required for cytokinesis. Plays a role in epithelial cell junctions formation. The protein is CD2-associated protein (Cd2ap) of Mus musculus (Mouse).